Reading from the N-terminus, the 350-residue chain is uncharacterized protein (350 aa).

Functionally, may play a role in septum formation. This is an uncharacterized protein from Mycobacterium tuberculosis (strain CDC 1551 / Oshkosh).